Here is a 350-residue protein sequence, read N- to C-terminus: N-acetyllactosaminide beta-1,3-N-acetylglucosaminyltransferase 4 (350 aa).

The Cytoplasmic segment spans residues 1–4 (MLPR). A helical; Signal-anchor for type II membrane protein transmembrane segment spans residues 5–25 (LGCVLFCSLVVLLLSCLLLLK). At 26-350 (ERIPAGSSKA…RLKCAATHKP (325 aa)) the chain is on the lumenal side. Residues Asn53 and Asn166 are each glycosylated (N-linked (GlcNAc...) asparagine).

It belongs to the glycosyltransferase 31 family.

The protein localises to the golgi apparatus membrane. It carries out the reaction a beta-D-galactosyl-(1-&gt;4)-N-acetyl-beta-D-glucosaminyl derivative + UDP-N-acetyl-alpha-D-glucosamine = an N-acetyl-beta-D-glucosaminyl-(1-&gt;3)-beta-D-galactosyl-(1-&gt;4)-N-acetyl-beta-D-glucosaminyl derivative + UDP + H(+). It participates in protein modification; protein glycosylation. In terms of biological role, beta-1,3-N-acetylglucosaminyltransferase involved in the synthesis of poly-N-acetyllactosamine. Has activity for type 2 oligosaccharides. In Mus musculus (Mouse), this protein is N-acetyllactosaminide beta-1,3-N-acetylglucosaminyltransferase 4 (B3gnt4).